The chain runs to 33 residues: Pardaxin P-5 (33 aa).

It belongs to the pardaxin family. As to quaternary structure, monomer. In aqueous solution exists as a tetramer.

Its subcellular location is the secreted. The protein localises to the target cell membrane. Its function is as follows. Exhibits unusual shark repellent and surfactant properties. Forms voltage-dependent, ion-permeable channels in membranes. At high concentration causes cell membrane lysis. This chain is Pardaxin P-5, found in Pardachirus marmoratus (Finless sole).